Here is a 400-residue protein sequence, read N- to C-terminus: S-adenosylmethionine synthase (400 aa).

An ATP-binding site is contributed by His-17. Asp-19 contributes to the Mg(2+) binding site. Position 45 (Glu-45) interacts with K(+). Residues Glu-58 and Gln-101 each contribute to the L-methionine site. A flexible loop region spans residues 101–111 (QSADIAMGVDQ). Residues 177–179 (DGK), 244–245 (RF), Asp-253, 259–260 (RK), Ala-276, and Lys-280 contribute to the ATP site. Residue Asp-253 coordinates L-methionine. L-methionine is bound at residue Lys-284.

It belongs to the AdoMet synthase family. In terms of assembly, homotetramer; dimer of dimers. Mg(2+) is required as a cofactor. It depends on K(+) as a cofactor.

Its subcellular location is the cytoplasm. It catalyses the reaction L-methionine + ATP + H2O = S-adenosyl-L-methionine + phosphate + diphosphate. It functions in the pathway amino-acid biosynthesis; S-adenosyl-L-methionine biosynthesis; S-adenosyl-L-methionine from L-methionine: step 1/1. In terms of biological role, catalyzes the formation of S-adenosylmethionine (AdoMet) from methionine and ATP. The overall synthetic reaction is composed of two sequential steps, AdoMet formation and the subsequent tripolyphosphate hydrolysis which occurs prior to release of AdoMet from the enzyme. The chain is S-adenosylmethionine synthase from Bacillus subtilis (strain 168).